The sequence spans 430 residues: Phosphoribosylamine--glycine ligase (430 aa).

An ATP-grasp domain is found at 109-316 (KDFMARHGIP…LLDLIEAALN (208 aa)). Residue 135–196 (VRQQGAPIVI…EEYLDGEEAS (62 aa)) participates in ATP binding. Mg(2+) contacts are provided by Glu-286 and Asn-288.

The protein belongs to the GARS family. It depends on Mg(2+) as a cofactor. Mn(2+) serves as cofactor.

The enzyme catalyses 5-phospho-beta-D-ribosylamine + glycine + ATP = N(1)-(5-phospho-beta-D-ribosyl)glycinamide + ADP + phosphate + H(+). Its pathway is purine metabolism; IMP biosynthesis via de novo pathway; N(1)-(5-phospho-D-ribosyl)glycinamide from 5-phospho-alpha-D-ribose 1-diphosphate: step 2/2. This chain is Phosphoribosylamine--glycine ligase, found in Xylella fastidiosa (strain Temecula1 / ATCC 700964).